The chain runs to 164 residues: DNA-binding protein inhibitor ID-1 (164 aa).

The region spanning 46-98 (LPALLDEQQVNVLLYDMNGCYSRLKELVPTLPQNRKVSKVEILQHVIDYIRDL) is the bHLH domain. The Nuclear export signal motif lies at 91–104 (VIDYIRDLQLELNS).

Heterodimer with other HLH proteins. Interacts with COPS5, IFI204, GATA4, NKX2-5, CLOCK and BMAL1. Isoform Short can form homodimers. Phosphorylated in vitro by PKA and PKC.

It is found in the cytoplasm. The protein localises to the nucleus. Transcriptional regulator (lacking a basic DNA binding domain) which negatively regulates the basic helix-loop-helix (bHLH) transcription factors by forming heterodimers and inhibiting their DNA binding and transcriptional activity. Implicated in regulating a variety of cellular processes, including cellular growth, senescence, differentiation, apoptosis, angiogenesis, and neoplastic transformation. Inhibits skeletal muscle and cardiac myocyte differentiation. Regulates the circadian clock by repressing the transcriptional activator activity of the CLOCK-BMAL1 heterodimer. The protein is DNA-binding protein inhibitor ID-1 (Id1) of Rattus norvegicus (Rat).